Here is a 127-residue protein sequence, read N- to C-terminus: Glycine cleavage system H protein (127 aa).

Residues 22 to 104 enclose the Lipoyl-binding domain; the sequence is KVRIGITDFA…YEKAWMIVVE (83 aa). The residue at position 63 (Lys-63) is an N6-lipoyllysine.

The protein belongs to the GcvH family. In terms of assembly, the glycine cleavage system is composed of four proteins: P, T, L and H. (R)-lipoate serves as cofactor.

The glycine cleavage system catalyzes the degradation of glycine. The H protein shuttles the methylamine group of glycine from the P protein to the T protein. Its function is as follows. Is also involved in protein lipoylation via its role as an octanoyl/lipoyl carrier protein intermediate. This Bacillus licheniformis (strain ATCC 14580 / DSM 13 / JCM 2505 / CCUG 7422 / NBRC 12200 / NCIMB 9375 / NCTC 10341 / NRRL NRS-1264 / Gibson 46) protein is Glycine cleavage system H protein.